The sequence spans 868 residues: Cytosolic phospholipase A2 epsilon (868 aa).

A disordered region spans residues 1–46 (MSLQASEGCPGLGTNVFVPQSPQTDEEGSRSGRSFSEFEDTQDLDT). Residues 46–170 (TPGLPPFCPM…CFRKKTHVKF (125 aa)) form the C2 domain. Asp-84, Asp-90, Asp-140, Asp-142, and Asp-148 together coordinate Ca(2+). The 533-residue stretch at 324–856 (PCPETLDVRL…TLLQALRLAV (533 aa)) folds into the PLA2c domain. The active-site Nucleophile is the Ser-412. The active-site Proton acceptor is Asp-700. Ser-800 carries the phosphoserine modification. Positions 857–868 (EKKKRLKGQCPS) are required for localization at membrane structures.

Ca(2+) is required as a cofactor.

The protein resides in the cytoplasm. The protein localises to the cytosol. Its subcellular location is the early endosome membrane. It localises to the lysosome membrane. It is found in the cell membrane. It carries out the reaction a 1,2-diacyl-sn-glycero-3-phosphoethanolamine + a 1,2-diacyl-sn-glycero-3-phosphocholine = an N-acyl-1,2-diacyl-sn-glycero-3-phosphoethanolamine + a 2-acyl-sn-glycero-3-phosphocholine + H(+). The enzyme catalyses 1-hexadecanoyl-2-octadecanoyl-sn-glycero-3-phosphocholine + 1,2-di-(9Z-octadecenoyl)-sn-glycero-3-phosphoethanolamine = 2-octadecanoyl-sn-glycero-3-phosphocholine + N-hexadecanoyl-1,2-di-(9Z-octadecenoyl)-sn-glycero-3-phosphoethanolamine + H(+). The catalysed reaction is 1-octadecanoyl-2-hexadecanoyl-sn-glycero-3-phosphocholine + 1,2-di-(9Z-octadecenoyl)-sn-glycero-3-phosphoethanolamine = N-octadecanoyl-1,2-di-(9Z-octadecenoyl)-sn-glycero-3-phosphoethanolamine + 2-hexadecanoyl-sn-glycero-3-phosphocholine + H(+). It catalyses the reaction 1,2-di-(9Z-octadecenoyl)-sn-glycero-3-phosphoethanolamine + 1,2-dihexadecanoyl-sn-glycero-3-phosphocholine = N-hexadecanoyl-1,2-di-(9Z-octadecenoyl)-sn-glycero-3-phosphoethanolamine + 2-hexadecanoyl-sn-glycero-3-phosphocholine + H(+). It carries out the reaction 1,2-di-(5Z,8Z,11Z,14Z-eicosatetraenoyl)-sn-glycero-3-phosphocholine + 1,2-di-(9Z-octadecenoyl)-sn-glycero-3-phosphoethanolamine = N-(5Z,8Z,11Z,14Z-eicosatetraenoyl)-1,2-di-(9Z-octadecenoyl)-sn-glycero-3-phosphoethanolamine + 2-(5Z,8Z,11Z,14Z)-eicosatetraenoyl-sn-glycero-3-phosphocholine + H(+). The enzyme catalyses 2 1,2-di-(9Z-octadecenoyl)-sn-glycero-3-phosphoethanolamine = N,1,2-tri-(9Z-octadecenoyl)-sn-glycero-3-phosphoethanolamine + 2-(9Z-octadecenoyl)-sn-glycero-3-phosphoethanolamine + H(+). The catalysed reaction is 1-(1Z-octadecenyl)-2-(9Z-octadecenoyl)-sn-glycero-3-phosphoethanolamine + 1,2-dihexadecanoyl-sn-glycero-3-phosphocholine = 1-O-(1Z-octadecenoyl)-2-(9Z-octadecenoyl)-sn-glycero-3-phospho-N-hexadecanoyl-ethanolamine + 2-hexadecanoyl-sn-glycero-3-phosphocholine + H(+). It catalyses the reaction a 1,2-diacyl-sn-glycero-3-phosphocholine + H2O = a 1-acyl-sn-glycero-3-phosphocholine + a fatty acid + H(+). It carries out the reaction 1-hexadecanoyl-2-(5Z,8Z,11Z,14Z-eicosatetraenoyl)-sn-glycero-3-phosphocholine + H2O = 1-hexadecanoyl-sn-glycero-3-phosphocholine + (5Z,8Z,11Z,14Z)-eicosatetraenoate + H(+). The enzyme catalyses 1-hexadecanoyl-sn-glycero-3-phosphocholine + H2O = sn-glycerol 3-phosphocholine + hexadecanoate + H(+). Stimulated by cytosolic Ca(2+). Stimulated by anionic phospholipids such as phosphatidylserines, phosphatidates and phosphatidylinositols. Functionally, calcium-dependent N-acyltransferase involved in the biosynthesis of N-acyl ethanolamines (NAEs) in the brain. Transfers the sn-1 fatty acyl chain of phosphatidylcholine (fatty acyl donor) to the amine group of phosphatidylethanolamine (fatty acyl acceptor) to generate N-acyl phosphatidylethanolamine (NAPE). Similarly can use plasmenylethanolamine as a fatty acyl acceptor to form N-acyl plasmenylethanolamine (N-Acyl-PlsEt). Both NAPE and N-Acyl-PlsEt can serve as precursors of bioactive NAEs like N-arachidonoyl phosphatidylethanolamine also called anandamide. Has weak phospholipase A2 and lysophospholipase activities. Regulates intracellular membrane trafficking that requires modulation of membrane curvature as it occurs by enrichment in lysophospholipids. Promotes tubule formation involved in clathrin-independent endocytotic trafficking and cargo recycling. The chain is Cytosolic phospholipase A2 epsilon from Homo sapiens (Human).